A 54-amino-acid polypeptide reads, in one-letter code: Sperm protamine P3 (54 aa).

Residues 1–54 (RRRRRRGKGKGGKKKKGKKRRRRGRKGKGKGKKKGKRKGKRGGKRRRRRRKGKK) are disordered.

Gonads.

The protein localises to the nucleus. It localises to the chromosome. Protamines substitute for histones in the chromatin of sperm during the haploid phase of spermatogenesis. They compact sperm DNA into a highly condensed, stable and inactive complex. This Bolinus brandaris (Purple dye murex) protein is Sperm protamine P3.